The primary structure comprises 266 residues: Blue copper protein (266 aa).

An N-terminal signal peptide occupies residues 1–24; the sequence is MAYSKILFCFMIGFVGFLPAITMA. Phytocyanin domains are found at residues 25 to 56, 57 to 102, and 116 to 216; these read TQYL…GDTL, APPP…TVED, and TEYW…TVEG. N-linked (GlcNAc...) asparagine glycosylation is present at asparagine 47. Histidine 156 lines the Cu cation pocket. Asparagine 162 is a glycosylation site (N-linked (GlcNAc...) asparagine). Cysteine 169 and cysteine 203 are oxidised to a cystine. Cu cation contacts are provided by cysteine 197, histidine 202, and glutamine 208. A helical membrane pass occupies residues 245-265; sequence ITSPYKMFVGGAVSIWTILTL.

The protein localises to the membrane. In Petunia hybrida (Petunia), this protein is Blue copper protein.